The primary structure comprises 327 residues: MSDASLTKINWQPTASIQTLLKRSKIMAEIRQFFTDRGVLEVETPALSEYSVTDVHLSTFSTEFLSPFAKQAKTLHLITSPEYHMKRLLAAGSSSIFQLCRVFRNEESGKRHNPEFTMLEWYRPHFDMYRLINEVDDLLQQILDCEPIESYSYQFVFQTYVGLDPLSASRAQLVEKARKHGFACEEDENRDTLLQFLFSEIVEANIGQERPTTVYHFPSSQAALAQISSEDHRVAERFEIYYKGLELANGFHELNDAKEQIRRFERDNQLREQMNLPPQPLDMRFLAALKAGIPNCSGVALGVDRLIMLALNANHIQEVMAFGVERA.

A substrate-binding site is contributed by Ser80–Glu82. Residues Arg104–Glu106 and Asn113 each bind ATP. Tyr122 serves as a coordination point for substrate. Residue Glu246 to Leu247 coordinates ATP. Glu253 serves as a coordination point for substrate. Residue Gly302 coordinates ATP.

This sequence belongs to the class-II aminoacyl-tRNA synthetase family. EpmA subfamily. As to quaternary structure, homodimer.

It catalyses the reaction D-beta-lysine + L-lysyl-[protein] + ATP = N(6)-((3R)-3,6-diaminohexanoyl)-L-lysyl-[protein] + AMP + diphosphate + H(+). In terms of biological role, with EpmB is involved in the beta-lysylation step of the post-translational modification of translation elongation factor P (EF-P). Catalyzes the ATP-dependent activation of (R)-beta-lysine produced by EpmB, forming a lysyl-adenylate, from which the beta-lysyl moiety is then transferred to the epsilon-amino group of a conserved specific lysine residue in EF-P. The protein is Elongation factor P--(R)-beta-lysine ligase of Haemophilus ducreyi (strain 35000HP / ATCC 700724).